Reading from the N-terminus, the 283-residue chain is Hydrogenase expression/formation protein HoxQ (283 aa).

Residues 1-29 form a disordered region; sequence MNDDLPILPPGFGPGSHGEEERPDCPSMP.

Belongs to the HupH/HyaF family.

The chain is Hydrogenase expression/formation protein HoxQ (hoxQ) from Azotobacter vinelandii.